We begin with the raw amino-acid sequence, 123 residues long: Ribonuclease P protein component (123 aa).

It belongs to the RnpA family. Consists of a catalytic RNA component (M1 or rnpB) and a protein subunit.

It carries out the reaction Endonucleolytic cleavage of RNA, removing 5'-extranucleotides from tRNA precursor.. RNaseP catalyzes the removal of the 5'-leader sequence from pre-tRNA to produce the mature 5'-terminus. It can also cleave other RNA substrates such as 4.5S RNA. The protein component plays an auxiliary but essential role in vivo by binding to the 5'-leader sequence and broadening the substrate specificity of the ribozyme. In Herpetosiphon aurantiacus (strain ATCC 23779 / DSM 785 / 114-95), this protein is Ribonuclease P protein component.